The primary structure comprises 629 residues: Phosphomethylpyrimidine synthase (629 aa).

Positions 1–20 (MSTTLKNAAHLSESAQVDSG) are disordered. Substrate-binding positions include N233, M262, Y291, H327, 347 to 349 (SRG), 388 to 391 (DGLR), and E427. H431 is a binding site for Zn(2+). Residue Y454 coordinates substrate. H495 provides a ligand contact to Zn(2+). Positions 575, 578, and 583 each coordinate [4Fe-4S] cluster.

This sequence belongs to the ThiC family. As to quaternary structure, homodimer. Requires [4Fe-4S] cluster as cofactor.

It catalyses the reaction 5-amino-1-(5-phospho-beta-D-ribosyl)imidazole + S-adenosyl-L-methionine = 4-amino-2-methyl-5-(phosphooxymethyl)pyrimidine + CO + 5'-deoxyadenosine + formate + L-methionine + 3 H(+). Its pathway is cofactor biosynthesis; thiamine diphosphate biosynthesis. Catalyzes the synthesis of the hydroxymethylpyrimidine phosphate (HMP-P) moiety of thiamine from aminoimidazole ribotide (AIR) in a radical S-adenosyl-L-methionine (SAM)-dependent reaction. This Pseudomonas savastanoi pv. phaseolicola (strain 1448A / Race 6) (Pseudomonas syringae pv. phaseolicola (strain 1448A / Race 6)) protein is Phosphomethylpyrimidine synthase.